The primary structure comprises 279 residues: Very long chain fatty acid elongase 1 (279 aa).

Residue Met1 is modified to N-acetylmethionine. 7 consecutive transmembrane segments (helical) span residues 23 to 43 (PLMG…YFIL), 61 to 81 (FMIV…YEFL), 110 to 130 (VAWL…IFIL), 137 to 154 (VTFL…SWWW), 176 to 196 (VVMY…PYLW), 203 to 223 (AIQL…YFMP), and 231 to 251 (IIIH…SNFW). The Di-lysine motif signature appears at 275–279 (KVKAN).

It belongs to the ELO family. ELOVL1 subfamily. As to quaternary structure, interacts with LASS2, TECR and HSD17B12. Interacts with TECR. As to expression, expressed in a broad variety of tissues. Highly expressed in stomach, lung, kidney, skin and intestine. Moderately expressed in white adipose tissue, liver, spleen, brain, brown adipose tissue, heart and muscle. Weakly expressed in testis.

It is found in the endoplasmic reticulum membrane. It catalyses the reaction a very-long-chain acyl-CoA + malonyl-CoA + H(+) = a very-long-chain 3-oxoacyl-CoA + CO2 + CoA. The catalysed reaction is eicosanoyl-CoA + malonyl-CoA + H(+) = 3-oxodocosanoyl-CoA + CO2 + CoA. The enzyme catalyses docosanoyl-CoA + malonyl-CoA + H(+) = 3-oxotetracosanoyl-CoA + CO2 + CoA. It carries out the reaction tetracosanoyl-CoA + malonyl-CoA + H(+) = 3-oxohexacosanoyl-CoA + CO2 + CoA. It catalyses the reaction (11Z)-eicosenoyl-CoA + malonyl-CoA + H(+) = 3-oxo-(13Z)-docosenoyl-CoA + CO2 + CoA. The catalysed reaction is (13Z)-docosenoyl-CoA + malonyl-CoA + H(+) = 3-oxo-(15Z)-tetracosenoyl-CoA + CO2 + CoA. It participates in lipid metabolism; fatty acid biosynthesis. Catalyzes the first and rate-limiting reaction of the four reactions that constitute the long-chain fatty acids elongation cycle. This endoplasmic reticulum-bound enzymatic process allows the addition of 2 carbons to the chain of long- and very long-chain fatty acids (VLCFAs) per cycle. Condensing enzyme that exhibits activity toward saturated and monounsaturated acyl-CoA substrates, with the highest activity towards C22:0 acyl-CoA. May participate in the production of both saturated and monounsaturated VLCFAs of different chain lengths that are involved in multiple biological processes as precursors of membrane lipids and lipid mediators. Important for saturated C24:0 and monounsaturated C24:1 sphingolipid synthesis. Indirectly inhibits RPE65 via production of VLCFAs. This Mus musculus (Mouse) protein is Very long chain fatty acid elongase 1.